The chain runs to 720 residues: Asp/Glu-specific dipeptidyl-peptidase (720 aa).

The N-terminal stretch at 1-21 (MKKRLLLPLFAALCLSQIAHA) is a signal peptide. Cys-69 and Cys-86 are disulfide-bonded. Residues His-85, Asp-227, and Ser-655 each act as charge relay system in the active site.

It belongs to the peptidase S46 family. As to quaternary structure, homodimer.

It localises to the cell surface. Enzyme activity is completely blocked by diisopropyl-fluorophosphates, moderately by phenylmethylsulfonyl fluoride (PMSF) and 4-(2-methyl)benzenesulfonyl fluoride, and slightly by pepstatin in vitro. Catalyzes the removal of dipeptides from the N-terminus of oligopeptides. Shows a strict specificity for acidic residues (Asp or Glu) in the P1 position, and has a hydrophobic residue preference at the P2 position. Preferentially cleaves the synthetic substrate Leu-Asp-methylcoumaryl-7-amide (Leu-Asp-MCA) as compared to Leu-Glu-MCA. Is involved in amino acid metabolism and bacterial growth of asaccharolytic P.gingivalis, that utilizes amino acids from extracellular proteinaceous nutrients as energy and carbon sources. The sequence is that of Asp/Glu-specific dipeptidyl-peptidase from Porphyromonas gingivalis (strain ATCC 33277 / DSM 20709 / CIP 103683 / JCM 12257 / NCTC 11834 / 2561).